Reading from the N-terminus, the 918-residue chain is Non-lysosomal glucosylceramidase (918 aa).

The disordered stretch occupies residues 886–918 (HKKSRRPSVTQGTGLSTQPECGPKRSLANLNSE). Polar residues predominate over residues 892 to 904 (PSVTQGTGLSTQP). At Ser-893 the chain carries Phosphoserine.

It belongs to the non-lysosomal glucosylceramidase family. Widely expressed at low level. Highly expressed in testis and brain. Ubiquitously expressed in the brain (at protein level). Expressed by Sertoli cells (at protein level).

The protein localises to the endoplasmic reticulum membrane. It is found in the golgi apparatus membrane. It catalyses the reaction a beta-D-glucosyl-(1&lt;-&gt;1')-N-acylsphing-4-enine + H2O = an N-acylsphing-4-enine + D-glucose. It carries out the reaction a beta-D-galactosyl-(1&lt;-&gt;1')-N-acylsphing-4-enine + H2O = an N-acylsphing-4-enine + D-galactose. The enzyme catalyses beta-D-glucosyl-(1-&gt;3)-O-lithocholate + H2O = lithocholate + D-glucose. The catalysed reaction is beta-D-glucosyl-(1-&gt;3)-O-chenodeoxycholate + H2O = chenodeoxycholate + D-glucose. It catalyses the reaction a di-trans,poly-cis-dolichyl beta-D-glucosyl phosphate + chenodeoxycholate = beta-D-glucosyl-(1-&gt;3)-O-chenodeoxycholate + a di-trans,poly-cis-dolichyl phosphate + H(+). It carries out the reaction octyl beta-D-glucose + chenodeoxycholate = beta-D-glucosyl-(1-&gt;3)-O-chenodeoxycholate + octan-1-ol. The enzyme catalyses cholesteryl 3-beta-D-glucoside + H2O = cholesterol + D-glucose. The catalysed reaction is a beta-D-glucosyl-(1&lt;-&gt;1')-N-acylsphing-4-enine + cholesterol = cholesteryl 3-beta-D-glucoside + an N-acylsphing-4-enine. It catalyses the reaction beta-D-glucosyl-N-(9Z-octadecenoyl)-sphing-4E-enine + cholesterol = N-(9Z-octadecenoyl)-sphing-4-enine + cholesteryl 3-beta-D-glucoside. It carries out the reaction a beta-D-galactosyl-(1&lt;-&gt;1')-N-acylsphing-4-enine + cholesterol = cholesteryl 3-beta-D-galactoside + an N-acylsphing-4-enine. The enzyme catalyses 1-(beta-D-galactosyl)-N-dodecanoylsphing-4-enine + cholesterol = cholesteryl 3-beta-D-galactoside + N-dodecanoylsphing-4-enine. It functions in the pathway lipid metabolism; sphingolipid metabolism. The protein operates within steroid metabolism; cholesterol metabolism. Its activity is regulated as follows. Enzymatic activity is dependent on membrane association and requires the presence of lipids. Inhibited by N-(adamantanemethyloxypentyl)-deoxynojirimycin/AMP-DNM. Inhibited by its product sphingosine/N-acylsphing-4-enine in a feedback loop. Also inhibited by other non-acetylated sphingoid bases and their derivatives but not by sphingosine-1-phosphate and complex sphingolipids. Functionally, non-lysosomal glucosylceramidase that catalyzes the hydrolysis of glucosylceramides/GlcCers (such as beta-D-glucosyl-(1&lt;-&gt;1')-N-acylsphing-4-enine) to free glucose and ceramides (such as N-acylsphing-4-enine). GlcCers are membrane glycosphingolipids that have a wide intracellular distribution. They are the main precursors of more complex glycosphingolipids that play a role in cellular growth, differentiation, adhesion, signaling, cytoskeletal dynamics and membrane properties. Also involved in the transglucosylation of cholesterol, transferring glucose from GlcCer, thereby modifying its water solubility and biological properties. Under specific conditions, may catalyze the reverse reaction, transferring glucose from cholesteryl-3-beta-D-glucoside to ceramide (such as N-acylsphing-4-enine). May play a role in the metabolism of bile acids. Able to hydrolyze bile acid 3-O-glucosides as well as to produce bile acid-glucose conjugates thanks to a bile acid glucosyl transferase activity. Catalyzes the hydrolysis of galactosylceramides/GalCers (such as beta-D-galactosyl-(1&lt;-&gt;1')-N-acylsphing-4-enine), as well as galactosyl transfer between GalCers and cholesterol in vitro with lower activity compared with their activity against GlcCers. The polypeptide is Non-lysosomal glucosylceramidase (Mus musculus (Mouse)).